Consider the following 152-residue polypeptide: Superoxide dismutase [Cu-Zn] 2 (152 aa).

Cu cation contacts are provided by His-45, His-47, and His-62. Positions 53-81 (TNGSMSTGPHFNPDGKQHGAPEDANRHAG) are disordered. Zn(2+)-binding residues include His-62, His-70, His-79, and Asp-82. Over residues 65–81 (PDGKQHGAPEDANRHAG) the composition is skewed to basic and acidic residues. A Cu cation-binding site is contributed by His-119.

It belongs to the Cu-Zn superoxide dismutase family. In terms of assembly, homodimer. Cu cation serves as cofactor. It depends on Zn(2+) as a cofactor.

The protein resides in the cytoplasm. It carries out the reaction 2 superoxide + 2 H(+) = H2O2 + O2. Its function is as follows. Destroys radicals which are normally produced within the cells and which are toxic to biological systems. The protein is Superoxide dismutase [Cu-Zn] 2 (SODCC2) of Brassica juncea (Indian mustard).